Reading from the N-terminus, the 744-residue chain is Biotin sulfoxide reductase (744 aa).

S121 lines the Mo-bis(molybdopterin guanine dinucleotide) pocket.

This sequence belongs to the prokaryotic molybdopterin-containing oxidoreductase family. The cofactor is Mo-bis(molybdopterin guanine dinucleotide).

Functionally, this enzyme may serve as a scavenger, allowing the cell to utilize biotin sulfoxide as a biotin source. It reduces a spontaneous oxidation product of biotin, D-biotin D-sulfoxide (BSO or BDS), back to biotin. The sequence is that of Biotin sulfoxide reductase from Cereibacter sphaeroides (Rhodobacter sphaeroides).